A 97-amino-acid polypeptide reads, in one-letter code: Large ribosomal subunit protein bL27 (97 aa).

A propeptide spanning residues 1 to 12 is cleaved from the precursor; the sequence is MLKMNLANLQLF. The tract at residues 14–37 is disordered; sequence HKKGGGSTSNGRDSQAKRLGAKAA.

This sequence belongs to the bacterial ribosomal protein bL27 family. The N-terminus is cleaved by ribosomal processing cysteine protease Prp.

The protein is Large ribosomal subunit protein bL27 of Streptococcus gordonii (strain Challis / ATCC 35105 / BCRC 15272 / CH1 / DL1 / V288).